Here is a 1464-residue protein sequence, read N- to C-terminus: Neuropathy target esterase sws (1464 aa).

Topologically, residues 1–34 are lumenal; it reads MDVLELLRASATGCYNTIFSEAWHQYVHKQIAAA. The helical transmembrane segment at 35–55 threads the bilayer; that stretch reads VYWYGALFLLGVLLFVWFLYF. Residues 56 to 1464 are Cytoplasmic-facing; that stretch reads KRLARLRLRD…GNTTNNDTKN (1409 aa). 176–303 is an a nucleoside 3',5'-cyclic phosphate binding site; that stretch reads IFGHFEKPIF…IRVIQVIMIR (128 aa). 2 disordered regions span residues 329–393 and 409–438; these read NKNS…LHYH and QQQQ…SSPT. A compositionally biased stretch (low complexity) spans 338–367; it reads TGQTTSNVQSQTSQATQSRPSGTTRTPTSP. Residues 409-420 show a composition bias toward polar residues; it reads QQQQSLNSPRRN. Residue S421 is modified to Phosphoserine. Positions 422 to 438 are enriched in low complexity; sequence TAHVSEAAAASTASSPT. A nucleoside 3',5'-cyclic phosphate-binding positions include 456–586 and 575–702; these read ELGL…VVRR and IVLG…LSHR. A PNPLA domain is found at 928-1094; that stretch reads LVLGGGGARG…VNNLPGHLWR (167 aa). Positions 932–937 match the GXGXXG motif; the sequence is GGGARG. The short motif at 959–963 is the GXSXG element; that stretch reads GVSIG. The Nucleophile role is filled by S961. The Proton acceptor role is filled by D1081. Residues 1081 to 1083 carry the DGA/G motif; it reads DGG. Position 1175 is a phosphoserine (S1175). Disordered regions lie at residues 1352–1374 and 1400–1464; these read VDKA…PTPS and ATNT…DTKN. Basic and acidic residues predominate over residues 1429–1444; it reads KRTEQDEHELEHEQVV. Positions 1450 to 1464 are enriched in polar residues; that stretch reads MDKQQGNTTNNDTKN.

Belongs to the NTE family. In terms of assembly, interacts with Pka-C3; interaction inhibits the catalytic function of Pka-C3 and the esterase activity of sws.

Its subcellular location is the endoplasmic reticulum membrane. It catalyses the reaction a 1-acyl-sn-glycero-3-phosphocholine + H2O = sn-glycerol 3-phosphocholine + a fatty acid + H(+). Its function is as follows. Phospholipase B that deacylates intracellular phosphatidylcholine (PtdCho), generating glycerophosphocholine (GroPtdCho). This deacylation occurs at both sn-2 and sn-1 positions of PtdCho. Its specific chemical modification by certain organophosphorus (OP) compounds leads to distal axonopathy. Plays a role in the signaling mechanism between neurons and glia that regulates glia wrapping during development of the adult brain. Essential for membrane lipid homeostasis and cell survival in both neurons and glia of the adult brain. The polypeptide is Neuropathy target esterase sws (Drosophila grimshawi (Hawaiian fruit fly)).